The primary structure comprises 249 residues: 5'-nucleotidase SurE (249 aa).

4 residues coordinate a divalent metal cation: aspartate 8, aspartate 9, serine 39, and asparagine 91.

It belongs to the SurE nucleotidase family. Requires a divalent metal cation as cofactor.

It is found in the cytoplasm. The enzyme catalyses a ribonucleoside 5'-phosphate + H2O = a ribonucleoside + phosphate. In terms of biological role, nucleotidase that shows phosphatase activity on nucleoside 5'-monophosphates. This Pseudomonas fluorescens (strain Pf0-1) protein is 5'-nucleotidase SurE.